The primary structure comprises 152 residues: Succinate dehydrogenase [ubiquinone] cytochrome b small subunit, mitochondrial (152 aa).

The N-terminal 21 residues, 1–21, are a transit peptide targeting the mitochondrion; the sequence is MATLLRVSSLCRANRASAFKS. Residues 22–56 lie on the Mitochondrial matrix side of the membrane; it reads LLIRPVPCLTQDHHMVQTSQIHTSPNHHAGSKAAS. A helical membrane pass occupies residues 57–78; that stretch reads MHWTSERALSVALLGLLPAAYL. Residues 79–83 are Mitochondrial intermembrane-facing; the sequence is YPGAA. Residues 84 to 104 form a helical membrane-spanning segment; sequence MDYSLAAALTLHGHWGLGQVV. A heme b-binding site is contributed by His95. Topologically, residues 105–113 are mitochondrial matrix; that stretch reads TDYVHGDAK. Residue Tyr107 coordinates a ubiquinone. Residues 114-135 form a helical membrane-spanning segment; that stretch reads IKMANTSLFALSALTFAGLCYF. At 136–152 the chain is on the mitochondrial intermembrane side; that stretch reads NYHDVGICKAVSMLWSL.

The protein belongs to the CybS family. In terms of assembly, component of complex II composed of four subunits: the flavoprotein (FP) SDHA, iron-sulfur protein (IP) SDHB, and a cytochrome b560 composed of SDHC and SDHD.

It localises to the mitochondrion inner membrane. It participates in carbohydrate metabolism; tricarboxylic acid cycle. Its function is as follows. Membrane-anchoring subunit of succinate dehydrogenase (SDH) that is involved in complex II of the mitochondrial electron transport chain and is responsible for transferring electrons from succinate to ubiquinone (coenzyme Q). SDH also oxidizes malate to the non-canonical enol form of oxaloacetate, enol-oxaloacetate. Enol-oxaloacetate, which is a potent inhibitor of the succinate dehydrogenase activity, is further isomerized into keto-oxaloacetate. The chain is Succinate dehydrogenase [ubiquinone] cytochrome b small subunit, mitochondrial (sdhd) from Xenopus tropicalis (Western clawed frog).